The sequence spans 276 residues: Large ribosomal subunit protein uL2 (276 aa).

Disordered regions lie at residues methionine 1–threonine 50 and glycine 206–arginine 276. Over residues arginine 7 to valine 19 the composition is skewed to polar residues. The span at serine 20 to lysine 38 shows a compositional bias: basic and acidic residues.

It belongs to the universal ribosomal protein uL2 family. In terms of assembly, part of the 50S ribosomal subunit. Forms a bridge to the 30S subunit in the 70S ribosome.

In terms of biological role, one of the primary rRNA binding proteins. Required for association of the 30S and 50S subunits to form the 70S ribosome, for tRNA binding and peptide bond formation. It has been suggested to have peptidyltransferase activity; this is somewhat controversial. Makes several contacts with the 16S rRNA in the 70S ribosome. The chain is Large ribosomal subunit protein uL2 from Solibacter usitatus (strain Ellin6076).